We begin with the raw amino-acid sequence, 328 residues long: RNA-binding protein KhpB (328 aa).

A jag_N domain region spans residues 3 to 53; it reads VFTGSTVEEAIQKGLKELDIPRMKAHIKVISREKKGFLGLFGKKPAQVDIE. Residues 54–180 are linker; the sequence is AISETTVVKA…GLKVETNFDI (127 aa). Threonine 89 is subject to Phosphothreonine. One can recognise a KH domain in the interval 181-258; the sequence is EQVATEVMAY…SRTFYVTINV (78 aa). The R3H domain occupies 263–328; that stretch reads EHRAEVLQTY…PNRYVVVDTE (66 aa).

It belongs to the KhpB RNA-binding protein family. As to quaternary structure, interacts with KhpA; the 2 proteins colocalize throughout the cell cycle, with some increase at midcell in dividing cells. Interacts with StkP which phosphorylates it, interacts with MltG, MreC, RodZ and YidC2. Post-translationally, phosphorylated on Thr-89 by StkP; there is another poorly phosphorylated residue in the protein. Dephosphorylated by PhpP.

The protein localises to the cytoplasm. Functionally, a probable RNA chaperone. Forms a complex with KhpA which binds to cellular RNA and controls its expression. Plays a role in peptidoglycan (PG) homeostasis and cell length regulation. Its function is as follows. Forms a complex with KhpA which presumably binds to about 170 cellular RNAs (mRNA, tRNA intergenic RNA and sRNAs); the proteins alone each bind the same set of RNAs. Suppresses the requirement for PBP2b (penA, a transpeptidase) in peripheral peptidoglycan (PG) synthesis. May function as a pleiotropic RNA chaperone controlling pneumococcal cell division, including PG homeostasis and regulating peripheral PG synthesis by the elongasome. The polypeptide is RNA-binding protein KhpB (Streptococcus pneumoniae serotype 2 (strain D39 / NCTC 7466)).